The sequence spans 75 residues: Conotoxin VnMKLT2-012 (75 aa).

A signal peptide spans 1 to 23; sequence MMKLTCVLIIAVLFLTACQLTTA. The propeptide occupies 24-45; that stretch reads ETRDEYRAVRSSDEVRNSRSTR. Over residues 31 to 45 the composition is skewed to basic and acidic residues; that stretch reads AVRSSDEVRNSRSTR. Positions 31–50 are disordered; sequence AVRSSDEVRNSRSTRDCSGS. Disulfide bonds link Cys47–Cys60, Cys54–Cys65, and Cys59–Cys74.

This sequence belongs to the conotoxin O1 superfamily. Expressed by the venom duct.

It localises to the secreted. This Conus ventricosus (Mediterranean cone) protein is Conotoxin VnMKLT2-012.